A 547-amino-acid chain; its full sequence is DEAD-box ATP-dependent RNA helicase 31 (547 aa).

Acidic residues predominate over residues 1-34; sequence MFDFGLSEDDSELGEVDEDDGPSGFEDDLFDDEG. The interval 1-74 is disordered; that stretch reads MFDFGLSEDD…HTRESGGGDS (74 aa). The segment covering 53–70 has biased composition (basic and acidic residues); sequence IKGEPIDQEGVVHTRESG. A Q motif motif is present at residues 79–107; that stretch reads TRFDECSLSPLTLKGVKAAGYERMTAVQE. The Helicase ATP-binding domain occupies 110-293; that stretch reads LPIILKGKDV…HIAMKRDLEF (184 aa). 123–130 contacts ATP; that stretch reads AKTGTGKT. A DEAD box motif is present at residues 241 to 244; that stretch reads DEAD. Residues 327-478 enclose the Helicase C-terminal domain; the sequence is LLTDHISENV…TKRKVEKALA (152 aa).

It belongs to the DEAD box helicase family.

It carries out the reaction ATP + H2O = ADP + phosphate + H(+). This Oryza sativa subsp. japonica (Rice) protein is DEAD-box ATP-dependent RNA helicase 31.